We begin with the raw amino-acid sequence, 40 residues long: Metallothionein-1 (40 aa).

Belongs to the metallothionein superfamily. Type 5 family.

Functionally, this protein binds cations of several transition elements. It is thought to be involved in detoxification processes. The protein is Metallothionein-1 (MtnA) of Drosophila melanogaster (Fruit fly).